A 357-amino-acid chain; its full sequence is Phospho-N-acetylmuramoyl-pentapeptide-transferase (357 aa).

A run of 10 helical transmembrane segments spans residues 4-24, 52-72, 77-97, 115-135, 153-173, 186-206, 228-248, 255-275, 280-300, and 334-354; these read QILF…PLLI, TMGG…SKVI, PTFS…VGFL, AKMA…LQFA, FGWT…ILAM, LATG…VWQF, PLDL…FLWW, IFMG…LAIC, LLVA…VIQV, and FWII…AGWA.

The protein belongs to the glycosyltransferase 4 family. MraY subfamily. Mg(2+) is required as a cofactor.

Its subcellular location is the cell membrane. It catalyses the reaction UDP-N-acetyl-alpha-D-muramoyl-L-alanyl-gamma-D-glutamyl-meso-2,6-diaminopimeloyl-D-alanyl-D-alanine + di-trans,octa-cis-undecaprenyl phosphate = di-trans,octa-cis-undecaprenyl diphospho-N-acetyl-alpha-D-muramoyl-L-alanyl-D-glutamyl-meso-2,6-diaminopimeloyl-D-alanyl-D-alanine + UMP. It participates in cell wall biogenesis; peptidoglycan biosynthesis. Its function is as follows. Catalyzes the initial step of the lipid cycle reactions in the biosynthesis of the cell wall peptidoglycan: transfers peptidoglycan precursor phospho-MurNAc-pentapeptide from UDP-MurNAc-pentapeptide onto the lipid carrier undecaprenyl phosphate, yielding undecaprenyl-pyrophosphoryl-MurNAc-pentapeptide, known as lipid I. The protein is Phospho-N-acetylmuramoyl-pentapeptide-transferase of Streptomyces avermitilis (strain ATCC 31267 / DSM 46492 / JCM 5070 / NBRC 14893 / NCIMB 12804 / NRRL 8165 / MA-4680).